Consider the following 271-residue polypeptide: Cytochrome b termination protein 1 (271 aa).

It is found in the mitochondrion. Its function is as follows. Involved in 5'-end processing of mitochondrial COB, 15S rRNA, and RPM1 transcript. May also have a role in 3'-end processing of the COB pre-mRNA. The protein is Cytochrome b termination protein 1 (CBT1) of Saccharomyces cerevisiae (strain ATCC 204508 / S288c) (Baker's yeast).